A 428-amino-acid chain; its full sequence is GTPase Obg (428 aa).

Residues 1 to 158 (MFVDQTKIDV…RTLRLELKVL (158 aa)) form the Obg domain. The OBG-type G domain occupies 159–328 (ADVGLVGFPS…LMGKTADLVE (170 aa)). GTP contacts are provided by residues 165-172 (GFPSVGKS), 190-194 (FTTLT), 212-215 (DLPG), 282-285 (TQMD), and 309-311 (SSV). Mg(2+) contacts are provided by serine 172 and threonine 192. The OCT domain occupies 350-428 (YKKPEDDGFK…IADFTFEFVD (79 aa)).

This sequence belongs to the TRAFAC class OBG-HflX-like GTPase superfamily. OBG GTPase family. As to quaternary structure, monomer. It depends on Mg(2+) as a cofactor.

It localises to the cytoplasm. An essential GTPase which binds GTP, GDP and possibly (p)ppGpp with moderate affinity, with high nucleotide exchange rates and a fairly low GTP hydrolysis rate. Plays a role in control of the cell cycle, stress response, ribosome biogenesis and in those bacteria that undergo differentiation, in morphogenesis control. This chain is GTPase Obg, found in Lactobacillus gasseri (strain ATCC 33323 / DSM 20243 / BCRC 14619 / CIP 102991 / JCM 1131 / KCTC 3163 / NCIMB 11718 / NCTC 13722 / AM63).